A 1394-amino-acid polypeptide reads, in one-letter code: DNA-directed RNA polymerase subunit beta (1394 aa).

This sequence belongs to the RNA polymerase beta chain family. As to quaternary structure, the RNAP catalytic core consists of 2 alpha, 1 beta, 1 beta' and 1 omega subunit. When a sigma factor is associated with the core the holoenzyme is formed, which can initiate transcription.

The enzyme catalyses RNA(n) + a ribonucleoside 5'-triphosphate = RNA(n+1) + diphosphate. Functionally, DNA-dependent RNA polymerase catalyzes the transcription of DNA into RNA using the four ribonucleoside triphosphates as substrates. This Anaplasma phagocytophilum (Ehrlichia phagocytophila) protein is DNA-directed RNA polymerase subunit beta.